The primary structure comprises 241 residues: Cytochrome b6-f complex iron-sulfur subunit 2, cyanelle (241 aa).

A cyanelle-targeting transit peptide spans 1–62 (MSAFACSAVA…AAKATTFSIS (62 aa)). The chain crosses the membrane as a helical span at residues 83 to 103 (LLGAIAGPTIGAGGPFVSFLV). One can recognise a Rieske domain in the interval 127–223 (VEKWLETXKP…VNVLEDGVVA (97 aa)). [2Fe-2S] cluster is bound by residues Cys169, His171, Cys187, and His190. Cys174 and Cys189 are joined by a disulfide.

The protein belongs to the Rieske iron-sulfur protein family. As to quaternary structure, the 4 large subunits of the cytochrome b6-f complex are cytochrome b6, subunit IV (17 kDa polypeptide, petD), cytochrome f and the Rieske protein, while the 4 small subunits are petG, petL, petM and petN. The complex functions as a dimer. [2Fe-2S] cluster serves as cofactor.

The protein resides in the plastid. The protein localises to the cyanelle thylakoid membrane. It catalyses the reaction 2 oxidized [plastocyanin] + a plastoquinol + 2 H(+)(in) = 2 reduced [plastocyanin] + a plastoquinone + 4 H(+)(out). In terms of biological role, component of the cytochrome b6-f complex, which mediates electron transfer between photosystem II (PSII) and photosystem I (PSI), cyclic electron flow around PSI, and state transitions. The protein is Cytochrome b6-f complex iron-sulfur subunit 2, cyanelle (petC-2) of Cyanophora paradoxa.